The sequence spans 365 residues: Galactoside alpha-(1,2)-fucosyltransferase 1 (365 aa).

Residues 1–8 (MWLRSHRQ) lie on the Cytoplasmic side of the membrane. A helical; Signal-anchor for type II membrane protein transmembrane segment spans residues 9-25 (LCLAFLLVCVLSVIFFL). At 26–365 (HIHQDSFPHG…LSPLWTLAKP (340 aa)) the chain is on the lumenal side. 2 N-linked (GlcNAc...) asparagine glycosylation sites follow: Asn-65 and Asn-327.

This sequence belongs to the glycosyltransferase 11 family.

Its subcellular location is the golgi apparatus. The protein resides in the golgi stack membrane. It catalyses the reaction a beta-D-galactosyl-(1-&gt;4)-N-acetyl-beta-D-glucosaminyl derivative + GDP-beta-L-fucose = an alpha-L-Fuc-(1-&gt;2)-beta-D-Gal-(1-&gt;4)-beta-D-GlcNAc derivative + GDP + H(+). The enzyme catalyses a ganglioside GA1 + GDP-beta-L-fucose = a ganglioside Fuc-GA1 + GDP + H(+). It carries out the reaction a beta-D-Gal-(1-&gt;3)-beta-D-GlcNAc-(1-&gt;3)-beta-D-Gal-(1-&gt;4)-beta-D-Glc-(1&lt;-&gt;1')-Cer(d18:1(4E)) + GDP-beta-L-fucose = alpha-L-fucosyl-(1-&gt;2)- beta-D-galactosyl-(1-&gt;3)-N-acetyl-beta-D-glucosaminyl-(1-&gt;3)-beta-D-galactosyl-(1-&gt;4)-beta-D-glucosyl-(1&lt;-&gt;1')-N-acylsphing-4-enine + GDP + H(+). The catalysed reaction is a neolactoside nLc4Cer(d18:1(4E)) + GDP-beta-L-fucose = a neolactoside IV(2)-alpha-Fuc-nLc4Cer(d18:1(4E)) + GDP + H(+). It catalyses the reaction a ganglioside GM1 + GDP-beta-L-fucose = a ganglioside Fuc-GM1 + GDP + H(+). The enzyme catalyses beta-D-galactosyl-(1-&gt;3)-N-acetyl-D-galactosamine + GDP-beta-L-fucose = alpha-L-fucosyl-(1-&gt;2)-beta-D-galactosyl-(1-&gt;3)-N-acetyl-D-galactosamine + GDP + H(+). Its pathway is protein modification; protein glycosylation. In terms of biological role, catalyzes the transfer of L-fucose, from a guanosine diphosphate-beta-L-fucose, to the terminal galactose residue of glycoconjugates through an alpha(1,2) linkage leading to H antigen synthesis that is an intermediate substrate in the synthesis of ABO blood group antigens. H antigen is essential for maturation of the glomerular layer of the main olfactory bulb, in cell migration and early cell-cell contacts during tumor associated angiogenesis. Preferentially fucosylates soluble lactose and to a lesser extent fucosylates glycolipids gangliosides GA1 and GM1a. In Homo sapiens (Human), this protein is Galactoside alpha-(1,2)-fucosyltransferase 1.